The primary structure comprises 422 residues: Probable D-serine dehydratase (422 aa).

K105 bears the N6-(pyridoxal phosphate)lysine mark.

This sequence belongs to the serine/threonine dehydratase family. DsdA subfamily. Pyridoxal 5'-phosphate serves as cofactor.

It carries out the reaction D-serine = pyruvate + NH4(+). The chain is Probable D-serine dehydratase from Carboxydothermus hydrogenoformans (strain ATCC BAA-161 / DSM 6008 / Z-2901).